Consider the following 280-residue polypeptide: uncharacterized protein (280 aa).

10 N-linked (GlcNAc...) asparagine; by host glycosylation sites follow: Asn75, Asn98, Asn107, Asn143, Asn158, Asn170, Asn192, Asn207, Asn224, and Asn230. Residues 235–255 (AFTYGSWGVAMLLFAAVMVLV) traverse the membrane as a helical segment.

It belongs to the RL11 family.

It localises to the host membrane. This is an uncharacterized protein from Human cytomegalovirus (strain Merlin) (HHV-5).